The sequence spans 137 residues: Large ribosomal subunit protein uL16 (137 aa).

Belongs to the universal ribosomal protein uL16 family. Part of the 50S ribosomal subunit.

Its function is as follows. Binds 23S rRNA and is also seen to make contacts with the A and possibly P site tRNAs. The protein is Large ribosomal subunit protein uL16 of Leptospira biflexa serovar Patoc (strain Patoc 1 / Ames).